Reading from the N-terminus, the 639-residue chain is PTS-dependent dihydroxyacetone kinase operon regulatory protein (639 aa).

The tract at residues 1–318 (MSGAFNNDGR…MRQLMTSQLG (318 aa)) is sensor domain. A GAF domain is found at 52-189 (AMLTLGQAAL…AIAREVGNLL (138 aa)). A PAS domain is found at 203–265 (NQLNALLESM…AVLQQAIKQA (63 aa)). One can recognise a Sigma-54 factor interaction domain in the interval 327-552 (MPQDDPQTRR…LYSVIENLAL (226 aa)). Residues 355-362 (GEEGVGKA) and 415-424 (AHGGTLFLEK) each bind ATP.

Homodimer. DhaR forms complexes with DhaK and DhaL-ADP.

Functionally, positively regulates the dhaKLM operon from a sigma-70 promoter. Represses its own expression. The polypeptide is PTS-dependent dihydroxyacetone kinase operon regulatory protein (Escherichia coli (strain K12)).